A 535-amino-acid polypeptide reads, in one-letter code: Probable glucomannan 4-beta-mannosyltransferase 14 (535 aa).

Residues 42–62 (QVVSVLLFVDAAYMAIVVAIV) form a helical membrane-spanning segment. The active site involves Asp131. The substrate site is built by Asp193 and Asp195. Residue Asp287 is part of the active site. 4 consecutive transmembrane segments (helical) span residues 366-386 (IVVH…TVIF), 403-423 (ITIL…YWIL), 482-502 (IMVG…GRTY), and 503-523 (LYVY…GYVG).

It belongs to the glycosyltransferase 2 family. Plant cellulose synthase-like A subfamily.

It is found in the golgi apparatus membrane. It catalyses the reaction GDP-mannose + (glucomannan)n = GDP + (glucomannan)n+1.. Functionally, probable mannan synthase which consists of a 4-beta-mannosyltransferase activity on mannan using GDP-mannose. The beta-1,4-mannan product is the backbone for galactomannan synthesis by galactomannan galactosyltransferase. Galactomannan is a noncellulosic polysaccharides of plant cell wall. This Arabidopsis thaliana (Mouse-ear cress) protein is Probable glucomannan 4-beta-mannosyltransferase 14.